The sequence spans 951 residues: UvrABC system protein A (951 aa).

33–40 (GLSGSGKS) is a binding site for ATP. Residues 252 to 279 (CPICGFTVGELEPRLFSFNAPQGACPDC) form a C4-type zinc finger. ABC transporter domains follow at residues 309–587 (WNPI…RKSL) and 607–935 (GNGK…QYLK). 639–646 (GVSGSGKS) is an ATP binding site. The segment at 738-764 (CEACHGDGILKIEMNFLPDVFVPCEVC) adopts a C4-type zinc-finger fold.

Belongs to the ABC transporter superfamily. UvrA family. Forms a heterotetramer with UvrB during the search for lesions.

It is found in the cytoplasm. The UvrABC repair system catalyzes the recognition and processing of DNA lesions. UvrA is an ATPase and a DNA-binding protein. A damage recognition complex composed of 2 UvrA and 2 UvrB subunits scans DNA for abnormalities. When the presence of a lesion has been verified by UvrB, the UvrA molecules dissociate. This chain is UvrABC system protein A, found in Lactiplantibacillus plantarum (strain ATCC BAA-793 / NCIMB 8826 / WCFS1) (Lactobacillus plantarum).